Consider the following 136-residue polypeptide: MGKPMQVSRYWRHFREKYRLIGGKCENGHLLFPKRPICPICGSRNIEEFQFSGKGKVITWTIVRNPPSGFEYYKPYPLALVQLEEGPVVLAQLTDVEPEEIKEGMEVEMVTRKIREFDEDGLILYGYKFRPIIKSE.

Zn(2+) is bound by residues C25, C38, and C41.

Belongs to the scaffold protein DUF35 family. In terms of assembly, interacts with acetoacetyl-CoA thiolase and HMG-CoA synthase (HMGCS) that catalyzes the first and second step in the mevalonate pathway, respectively.

Functions as a scaffold to connect the acetoacetyl-CoA thiolase and HMG-CoA synthase (HMGCS) dimers in the channeling thiolase/HMGCS complex, which allows for efficient coupling of the endergonic thiolase reaction with the exergonic HMGCS reaction. In Pyrococcus furiosus (strain ATCC 43587 / DSM 3638 / JCM 8422 / Vc1), this protein is DUF35 domain-containing scaffold protein.